An 89-amino-acid polypeptide reads, in one-letter code: Gallinacin-13 (89 aa).

The signal sequence occupies residues 1-23; sequence MRILQLLFAIVVILLLQDAPARG. Intrachain disulfides connect cysteine 30-cysteine 58, cysteine 37-cysteine 51, and cysteine 41-cysteine 59. Residues 66 to 89 form a disordered region; sequence PFSNPKHSVLHTAEQDPSPSLGGT.

The protein belongs to the beta-defensin family. In terms of tissue distribution, expressed in the liver, gall bladder, kidney, small intestine, spleen, testis, ovary and male and female reproductive tracts. Not detected in the ovarian stroma and the theca and granulosa layers of the ovarian follicle.

It localises to the secreted. The protein resides in the cytoplasmic granule. In terms of biological role, has bactericidal activity. Potent activity against E.coli, L.monocytogenes, S.typhimurium and S.pyogenes but mot against S.aureus. Has bactericidal activity. The protein is Gallinacin-13 (GAL13) of Gallus gallus (Chicken).